We begin with the raw amino-acid sequence, 274 residues long: Ribosomal RNA small subunit methyltransferase A (274 aa).

S-adenosyl-L-methionine-binding residues include His15, Leu17, Gly42, Glu64, Asp89, and Asn109.

Belongs to the class I-like SAM-binding methyltransferase superfamily. rRNA adenine N(6)-methyltransferase family. RsmA subfamily.

The protein localises to the cytoplasm. It catalyses the reaction adenosine(1518)/adenosine(1519) in 16S rRNA + 4 S-adenosyl-L-methionine = N(6)-dimethyladenosine(1518)/N(6)-dimethyladenosine(1519) in 16S rRNA + 4 S-adenosyl-L-homocysteine + 4 H(+). In terms of biological role, specifically dimethylates two adjacent adenosines (A1518 and A1519) in the loop of a conserved hairpin near the 3'-end of 16S rRNA in the 30S particle. May play a critical role in biogenesis of 30S subunits. The protein is Ribosomal RNA small subunit methyltransferase A of Synechococcus sp. (strain CC9605).